Reading from the N-terminus, the 511-residue chain is Frizzled/smoothened-like sans CRD protein C (511 aa).

The signal sequence occupies residues 1 to 25 (MNQINKFIKNLYLIIITIILIIVIS). Over 26 to 93 (NDNNGLFING…QWESYFEMSL (68 aa)) the chain is Extracellular. N51 is a glycosylation site (N-linked (GlcNAc...) asparagine). A helical transmembrane segment spans residues 94-114 (IMGSISMFASLFLIITYSPLI). At 115–122 (NKKHTRHT) the chain is on the cytoplasmic side. A helical transmembrane segment spans residues 123 to 143 (VGILCMSIGIFFVMVSDGRQL). Residues 144 to 172 (WDIESPGEYKKYCPDTGRYARQSDTKCLT) lie on the Extracellular side of the membrane. A helical membrane pass occupies residues 173 to 193 (TGLFFQFGCVTAIGWWSILAV). Over 194–209 (DLWMTIAKKVQTTKKQ) the chain is Cytoplasmic. A helical membrane pass occupies residues 210 to 230 (LLYYLIGINTVSLILTFGPVV). Topologically, residues 231 to 253 (KNQYGFGNAAIGCWMLDLKYQYG) are extracellular. Residues 254-274 (FFWIPVGICLSVGSVFIGLIF) form a helical membrane-spanning segment. The Cytoplasmic portion of the chain corresponds to 275-295 (WEIYKISDAVKKRYLKKHIKP). Residues 296–316 (LCLIVLMCLEFLYMFIYYSYI) form a helical membrane-spanning segment. The Extracellular segment spans residues 317 to 357 (TANQPTYNKHVAEYIMCLIINAANVPGSYTCQLKTVSPTAQ). Residues 358–378 (FLFLIAIRLMGLQGLIFYGLT) form a helical membrane-spanning segment. Residues 379–511 (AATKKVWANS…RVNSPDNLQP (133 aa)) lie on the Cytoplasmic side of the membrane. The interval 430 to 511 (NGYTTGGSDN…RVNSPDNLQP (82 aa)) is disordered. Over residues 433-443 (TTGGSDNGVGS) the composition is skewed to gly residues. The span at 451 to 460 (KSSSNGGAQD) shows a compositional bias: polar residues. Residues 461–485 (NNNNNNNNNNNNNNNNNNNNNNNNN) are compositionally biased toward low complexity. Positions 486–511 (SSSLEISGVESNNSTPRVNSPDNLQP) are enriched in polar residues.

It belongs to the G-protein coupled receptor Fz/Smo family.

Its subcellular location is the membrane. The sequence is that of Frizzled/smoothened-like sans CRD protein C (fscC) from Dictyostelium discoideum (Social amoeba).